The chain runs to 618 residues: uncharacterized protein (618 aa).

The segment at residues 18-47 (SCQRCRQRKIKCDRLHPCFQCVKSNSQCFY) is a DNA-binding region (zn(2)-C6 fungal-type). A Phosphoserine modification is found at Ser-598.

The protein localises to the nucleus. This is an uncharacterized protein from Schizosaccharomyces pombe (strain 972 / ATCC 24843) (Fission yeast).